A 495-amino-acid chain; its full sequence is DNA double-strand break repair helicase HerA (495 aa).

ATP-binding positions include Arg141, 150–155, and 458–459; these read GSGKSN and KI.

It belongs to the HerA family. In terms of assembly, forms a hexamer or a heptamer. Interacts with Mre11.

It carries out the reaction Couples ATP hydrolysis with the unwinding of duplex DNA at the replication fork by translocating in the 5'-3' direction. This creates two antiparallel DNA single strands (ssDNA). The leading ssDNA polymer is the template for DNA polymerase III holoenzyme which synthesizes a continuous strand.. The catalysed reaction is ATP + H2O = ADP + phosphate + H(+). It catalyses the reaction Couples ATP hydrolysis with the unwinding of duplex DNA by translocating in the 3'-5' direction.. Its activity is regulated as follows. ATPase activity is slightly stimulated by either circular single- or double-stranded (ds)DNA with a weak preference for dsDNA. Helicase activity is stimulated by Mre11. Its function is as follows. Involved in DNA double-strand break (DSB) repair. Probably acts with NurA to stimulate resection of the 5' strand and produce the long 3' single-strand that is required for RadA loading. Has DNA-dependent ATPase activity and bidirectional DNA helicase activity. Loads on either a 3' or a 5' DNA tail for subsequent DNA unwinding. Can also unwind blunt-ended dsDNA, Holliday junction and splayed-arm DNA. This chain is DNA double-strand break repair helicase HerA, found in Sulfurisphaera tokodaii (strain DSM 16993 / JCM 10545 / NBRC 100140 / 7) (Sulfolobus tokodaii).